Consider the following 409-residue polypeptide: BRCA1-A complex subunit Abraxas 1 (409 aa).

One can recognise an MPN domain in the interval 7–160 (SAVLSGFVLG…HSLYKPQKGL (154 aa)). A Phosphoserine modification is found at Ser48. A coiled-coil region spans residues 206–260 (DGSLKEVHKINEMYASLQEELKSICKKVEDSEQAVDKLVKDVNRLKREIEKRRGA). The span at 362 to 372 (LLDTQDKRSKA) shows a compositional bias: basic and acidic residues. The tract at residues 362-409 (LLDTQDKRSKADTGSSNQDKASKMSSPETDEEIEKMKGFGEYSRSPTF) is disordered. Residues 373–388 (DTGSSNQDKASKMSSP) are compositionally biased toward polar residues. 2 positions are modified to phosphoserine: Ser386 and Ser387. Thr390 is subject to Phosphothreonine. 2 positions are modified to phosphoserine: Ser404 and Ser406. The pSXXF motif motif lies at 406–409 (SPTF).

The protein belongs to the FAM175 family. Abraxas subfamily. In terms of assembly, component of the ARISC complex, at least composed of UIMC1/RAP80, ABRAXAS1, BRCC3/BRCC36, BABAM2 and BABAM1/NBA1. Component of the BRCA1-A complex, at least composed of BRCA1, BARD1, UIMC1/RAP80, ABRAXAS1, BRCC3/BRCC36, BABAM2 and BABAM1/NBA1. In the complex, interacts directly with UIMC1/RAP80, BRCC3/BRCC36 and BABAM2. Interacts directly (when phosphorylated at Ser-406) with BRCA1. Homodimer. The homodimer interacts directly (when phosphorylated at Ser-404 and Ser-406) with two BRCA1 chains, giving rise to a heterotetramer. Binds polyubiquitin. Post-translationally, phosphorylation of Ser-406 of the pSXXF motif by ATM or ATR constitutes a specific recognition motif for the BRCT domain of BRCA1. Ionizing radiation promotes rapid phosphorylation at Ser-404 and Ser-406 by ATM; this promotes recruitment of BRCA1 to sites of DNA damage.

Its subcellular location is the nucleus. Functionally, involved in DNA damage response and double-strand break (DSB) repair. Component of the BRCA1-A complex, acting as a central scaffold protein that assembles the various components of the complex and mediates the recruitment of BRCA1. The BRCA1-A complex specifically recognizes 'Lys-63'-linked ubiquitinated histones H2A and H2AX at DNA lesion sites, leading to target the BRCA1-BARD1 heterodimer to sites of DNA damage at DSBs. This complex also possesses deubiquitinase activity that specifically removes 'Lys-63'-linked ubiquitin on histones H2A and H2AX. The polypeptide is BRCA1-A complex subunit Abraxas 1 (Homo sapiens (Human)).